A 263-amino-acid polypeptide reads, in one-letter code: tRNA (guanine-N(7)-)-methyltransferase (263 aa).

The segment at 1–39 (MVHHGQMHAQPGVGLRPDTPVASGQLPSTSIRSRRSGIS) is disordered. S-adenosyl-L-methionine contacts are provided by Glu-82, Asp-107, Asn-136, and Asp-159. Asp-159 is a catalytic residue. Substrate contacts are provided by residues Lys-163, Asp-195, and 232–235 (TKYE).

This sequence belongs to the class I-like SAM-binding methyltransferase superfamily. TrmB family.

It carries out the reaction guanosine(46) in tRNA + S-adenosyl-L-methionine = N(7)-methylguanosine(46) in tRNA + S-adenosyl-L-homocysteine. The protein operates within tRNA modification; N(7)-methylguanine-tRNA biosynthesis. In terms of biological role, catalyzes the formation of N(7)-methylguanine at position 46 (m7G46) in tRNA. The polypeptide is tRNA (guanine-N(7)-)-methyltransferase (Mycobacterium bovis (strain ATCC BAA-935 / AF2122/97)).